The primary structure comprises 148 residues: Large-conductance mechanosensitive channel (148 aa).

The next 3 helical transmembrane spans lie at 21–41 (IDLA…DSVV), 45–65 (IMPL…KFLV), and 92–112 (GNFL…FIIV).

Belongs to the MscL family. In terms of assembly, homopentamer.

The protein localises to the cell inner membrane. Its function is as follows. Channel that opens in response to stretch forces in the membrane lipid bilayer. May participate in the regulation of osmotic pressure changes within the cell. The protein is Large-conductance mechanosensitive channel of Bordetella petrii (strain ATCC BAA-461 / DSM 12804 / CCUG 43448).